The primary structure comprises 151 residues: Transcriptional regulator MraZ (151 aa).

2 SpoVT-AbrB domains span residues 7–53 (EYDC…SQTE) and 82–125 (INEV…SPDL).

This sequence belongs to the MraZ family. Forms oligomers.

It is found in the cytoplasm. Its subcellular location is the nucleoid. The chain is Transcriptional regulator MraZ from Cytophaga hutchinsonii (strain ATCC 33406 / DSM 1761 / CIP 103989 / NBRC 15051 / NCIMB 9469 / D465).